Reading from the N-terminus, the 652-residue chain is DNA ligase (652 aa).

Residues 29-33 (DSDYD), 78-79 (SL), and E107 each bind NAD(+). K109 functions as the N6-AMP-lysine intermediate in the catalytic mechanism. NAD(+) is bound by residues R130, E164, K278, and K302. Zn(2+) is bound by residues C395, C398, C413, and C418. Residues 577–652 (NSDAALFGLT…IEDEDWLRKF (76 aa)) form the BRCT domain.

It belongs to the NAD-dependent DNA ligase family. LigA subfamily. Requires Mg(2+) as cofactor. Mn(2+) is required as a cofactor.

It catalyses the reaction NAD(+) + (deoxyribonucleotide)n-3'-hydroxyl + 5'-phospho-(deoxyribonucleotide)m = (deoxyribonucleotide)n+m + AMP + beta-nicotinamide D-nucleotide.. DNA ligase that catalyzes the formation of phosphodiester linkages between 5'-phosphoryl and 3'-hydroxyl groups in double-stranded DNA using NAD as a coenzyme and as the energy source for the reaction. It is essential for DNA replication and repair of damaged DNA. The protein is DNA ligase of Streptococcus pyogenes serotype M6 (strain ATCC BAA-946 / MGAS10394).